The primary structure comprises 971 residues: Exportin-2 (971 aa).

In terms of domain architecture, Importin N-terminal spans 29 to 102 (AEKFLESVEG…KANIVNLMLS (74 aa)).

Belongs to the XPO2/CSE1 family. Interacts with cftr.

Its subcellular location is the cytoplasm. The protein resides in the nucleus. Its function is as follows. Export receptor for importin alpha. Mediates importin-alpha re-export from the nucleus to the cytoplasm after import substrates have been released into the nucleoplasm. Negatively regulates fluid secretion and plays a role in fluid homeostasis by down-regulating cftr activity. The protein is Exportin-2 (cse1l) of Pagrus major (Red sea bream).